We begin with the raw amino-acid sequence, 308 residues long: Heme A synthase (308 aa).

Residues 1–8 (MFKKRNLK) lie on the Cytoplasmic side of the membrane. Residues 9 to 29 (WLSILATVIMAWVQLGGALVT) form a helical membrane-spanning segment. Residues 30 to 67 (KTGSENGCGASWPLCHGALLPQNLPIATIIELSHRATS) lie on the Extracellular side of the membrane. A disulfide bridge connects residues cysteine 37 and cysteine 44. The active site involves glutamate 60. A heme o-binding site is contributed by histidine 63. A helical transmembrane segment spans residues 68–88 (ALSLIVVLWLVITAWKNIGYI). At 89-93 (KEVKP) the chain is on the cytoplasmic side. Residues 94-114 (LCIISVAFLLIQALVGAAAVL) traverse the membrane as a helical segment. Over 115-123 (WQQNDYVLA) the chain is Extracellular. A helical transmembrane segment spans residues 124-144 (LHFGISLISFSSVFVLTLIIF). A heme o-binding site is contributed by histidine 125. Over 145–161 (DVDQKYEANKVHIDRKL) the chain is Cytoplasmic. The chain crosses the membrane as a helical span at residues 162 to 182 (RIYTWTMAICLYVGIYTGALV). The Extracellular segment spans residues 183-215 (RHTKSSLAYGSWPLPFNDLIPHTEQDWVQLAHR). Histidine 214 contributes to the heme b binding site. A helical membrane pass occupies residues 216 to 236 (TLALIASISVFLAFNYAIKHY). Topologically, residues 237–244 (QNNRTIRY) are cytoplasmic. The chain crosses the membrane as a helical span at residues 245-265 (GYTAALLLIILQIVTGALSIF). Over 266–270 (THVNL) the chain is Extracellular. Residues 271–291 (IIALLHALIITFEFGLIAYLI) traverse the membrane as a helical segment. Histidine 276 contacts heme b. The Cytoplasmic segment spans residues 292 to 308 (VLLLRSQRVEKVKQNAY).

It belongs to the COX15/CtaA family. Type 1 subfamily. In terms of assembly, interacts with CtaB. Heme b is required as a cofactor.

It localises to the cell membrane. The enzyme catalyses Fe(II)-heme o + 2 A + H2O = Fe(II)-heme a + 2 AH2. The protein operates within porphyrin-containing compound metabolism; heme A biosynthesis; heme A from heme O: step 1/1. Catalyzes the conversion of heme O to heme A by two successive hydroxylations of the methyl group at C8. The first hydroxylation forms heme I, the second hydroxylation results in an unstable dihydroxymethyl group, which spontaneously dehydrates, resulting in the formyl group of heme A. The sequence is that of Heme A synthase from Staphylococcus carnosus (strain TM300).